Here is a 309-residue protein sequence, read N- to C-terminus: Ribosomal RNA small subunit methyltransferase H (309 aa).

S-adenosyl-L-methionine is bound by residues 30–32 (GGH), aspartate 50, phenylalanine 74, aspartate 96, and glutamine 103.

This sequence belongs to the methyltransferase superfamily. RsmH family.

The protein localises to the cytoplasm. It catalyses the reaction cytidine(1402) in 16S rRNA + S-adenosyl-L-methionine = N(4)-methylcytidine(1402) in 16S rRNA + S-adenosyl-L-homocysteine + H(+). In terms of biological role, specifically methylates the N4 position of cytidine in position 1402 (C1402) of 16S rRNA. In Wigglesworthia glossinidia brevipalpis, this protein is Ribosomal RNA small subunit methyltransferase H.